A 165-amino-acid chain; its full sequence is Large ribosomal subunit protein uL11 (165 aa).

Serine 38 carries the phosphoserine modification. Lysine 40 is covalently cross-linked (Glycyl lysine isopeptide (Lys-Gly) (interchain with G-Cter in SUMO2)). Lysine 48 participates in a covalent cross-link: Glycyl lysine isopeptide (Lys-Gly) (interchain with G-Cter in ubiquitin). Lysine 54 carries the post-translational modification N6-acetyllysine. Lysine 83 participates in a covalent cross-link: Glycyl lysine isopeptide (Lys-Gly) (interchain with G-Cter in ubiquitin). The residue at position 165 (serine 165) is a Phosphoserine.

Belongs to the universal ribosomal protein uL11 family. As to quaternary structure, component of the large ribosomal subunit. Mature ribosomes consist of a small (40S) and a large (60S) subunit. The 40S subunit contains about 33 different proteins and 1 molecule of RNA (18S). The 60S subunit contains about 49 different proteins and 3 molecules of RNA (28S, 5.8S and 5S). Ubiquitinated at Lys-48 and Lys-83 by RNF14 and RNF25 in response to ribosome collisions (ribosome stalling).

The protein resides in the cytoplasm. Functionally, component of the large ribosomal subunit. The ribosome is a large ribonucleoprotein complex responsible for the synthesis of proteins in the cell. Binds directly to 26S ribosomal RNA. The polypeptide is Large ribosomal subunit protein uL11 (RPL12) (Chinchilla lanigera (Long-tailed chinchilla)).